A 221-amino-acid polypeptide reads, in one-letter code: Ras-related protein RabS (221 aa).

A GTP-binding site is contributed by 16–23; that stretch reads GDNQCGKS. The short motif at 38–47 is the Effector region element; the sequence is GIQLWHGIEI. GTP-binding positions include 71–75 and 137–140; these read DGNGG and NKCD. Residue C218 is modified to Cysteine methyl ester. C218 carries the S-geranylgeranyl cysteine lipid modification. Residues 219–221 constitute a propeptide, removed in mature form; that stretch reads IIN.

This sequence belongs to the small GTPase superfamily. Rab family.

It localises to the cell membrane. This chain is Ras-related protein RabS (rabS), found in Dictyostelium discoideum (Social amoeba).